Consider the following 55-residue polypeptide: Large ribosomal subunit protein bL33 (55 aa).

The protein belongs to the bacterial ribosomal protein bL33 family.

This chain is Large ribosomal subunit protein bL33, found in Yersinia pestis (strain Pestoides F).